The sequence spans 366 residues: Tripartite motif-containing protein 54 (366 aa).

Residues Cys26 to Arg82 form an RING-type zinc finger. The B box-type zinc-finger motif lies at Glu121–Leu163. Zn(2+) contacts are provided by Cys126, His129, Cys149, and His155. A mediates microtubule-binding and homooligomerization region spans residues Lys168 to Gln211. Positions Asn185–Glu258 form a coiled coil. A COS domain is found at Met271–Gln329. The disordered stretch occupies residues Ile326–His366. Over residues Gly334 to Glu347 the composition is skewed to acidic residues. The segment covering Glu353–His366 has biased composition (basic and acidic residues).

As to quaternary structure, homooligomer and heterooligomer. Interacts with TRIM63 and probably with TRIM55. Interacts with tubulin.

Its subcellular location is the cytoplasm. It is found in the cytoskeleton. The protein resides in the myofibril. The protein localises to the sarcomere. It localises to the z line. May bind and stabilize microtubules during myotubes formation. The chain is Tripartite motif-containing protein 54 (TRIM54) from Bos taurus (Bovine).